A 310-amino-acid chain; its full sequence is Malate dehydrogenase (310 aa).

NAD(+) is bound by residues 7-12 (GAGNVG) and aspartate 32. Positions 81 and 87 each coordinate substrate. NAD(+) is bound by residues asparagine 94 and 117–119 (VSN). Residues asparagine 119 and arginine 150 each contribute to the substrate site. Histidine 174 acts as the Proton acceptor in catalysis.

Belongs to the LDH/MDH superfamily. MDH type 3 family.

The enzyme catalyses (S)-malate + NAD(+) = oxaloacetate + NADH + H(+). Catalyzes the reversible oxidation of malate to oxaloacetate. The polypeptide is Malate dehydrogenase (Chlorobium phaeobacteroides (strain DSM 266 / SMG 266 / 2430)).